The primary structure comprises 214 residues: Thymidylate kinase (214 aa).

10 to 17 (GGEGAGKS) is an ATP binding site.

This sequence belongs to the thymidylate kinase family.

The enzyme catalyses dTMP + ATP = dTDP + ADP. In terms of biological role, phosphorylation of dTMP to form dTDP in both de novo and salvage pathways of dTTP synthesis. The polypeptide is Thymidylate kinase (Brucella suis biovar 1 (strain 1330)).